A 151-amino-acid polypeptide reads, in one-letter code: Small ribosomal subunit protein uS15y (151 aa).

The protein belongs to the universal ribosomal protein uS15 family.

In Arabidopsis thaliana (Mouse-ear cress), this protein is Small ribosomal subunit protein uS15y (RPS13B).